A 1298-amino-acid polypeptide reads, in one-letter code: Phosphoribosylformylglycinamidine synthase (1298 aa).

The disordered stretch occupies residues 298 to 328 (TAIAPFPGASTGSGGEIRDEGATGRGAKPKA). Residues 305 to 316 (GASTGSGGEIRD), 384 to 386 (TGY), and Ala676 each bind ATP. Mg(2+) is bound by residues Asp677, Glu716, Asn720, and Asp884. Ser886 provides a ligand contact to ATP. One can recognise a Glutamine amidotransferase type-1 domain in the interval 1045-1298 (VAILREQGVN…MFRNARVWVD (254 aa)). The Nucleophile role is filled by Cys1138. Residues His1263 and Glu1265 contribute to the active site.

It in the N-terminal section; belongs to the FGAMS family. Monomer.

It is found in the cytoplasm. The enzyme catalyses N(2)-formyl-N(1)-(5-phospho-beta-D-ribosyl)glycinamide + L-glutamine + ATP + H2O = 2-formamido-N(1)-(5-O-phospho-beta-D-ribosyl)acetamidine + L-glutamate + ADP + phosphate + H(+). It participates in purine metabolism; IMP biosynthesis via de novo pathway; 5-amino-1-(5-phospho-D-ribosyl)imidazole from N(2)-formyl-N(1)-(5-phospho-D-ribosyl)glycinamide: step 1/2. Phosphoribosylformylglycinamidine synthase involved in the purines biosynthetic pathway. Catalyzes the ATP-dependent conversion of formylglycinamide ribonucleotide (FGAR) and glutamine to yield formylglycinamidine ribonucleotide (FGAM) and glutamate. The sequence is that of Phosphoribosylformylglycinamidine synthase from Pseudomonas aeruginosa (strain ATCC 15692 / DSM 22644 / CIP 104116 / JCM 14847 / LMG 12228 / 1C / PRS 101 / PAO1).